The chain runs to 285 residues: Protein HEXIM1 (285 aa).

2 disordered regions span residues 1–56 (MSEV…QNPG) and 132–196 (LMED…LQKD). Over residues 23 to 36 (GGWHHPVEREEHPV) the composition is skewed to basic and acidic residues. Residues 168–180 (TDDDLEEEEDEAG) show a composition bias toward acidic residues. Positions 213–284 (SKQDLIKEYL…QEGKQVAADS (72 aa)) form a coiled coil.

The protein belongs to the HEXIM family. In terms of assembly, homooligomer and heterooligomer. Core component of the 7SK RNP complex.

Its subcellular location is the nucleus. The protein resides in the cytoplasm. Its function is as follows. Transcriptional regulator which functions as a general RNA polymerase II transcription inhibitor. Core component of the 7SK RNP complex: in cooperation with 7SK snRNA sequesters P-TEFb in a large inactive 7SK snRNP complex preventing RNA polymerase II phosphorylation and subsequent transcriptional elongation. Plays a role in the regulation of DNA virus-mediated innate immune response by assembling into the HDP-RNP complex, a complex that serves as a platform for IRF3 phosphorylation and subsequent innate immune response activation through the cGAS-STING pathway. The sequence is that of Protein HEXIM1 (hexim1) from Xenopus laevis (African clawed frog).